A 344-amino-acid polypeptide reads, in one-letter code: UDP-3-O-acylglucosamine N-acyltransferase (344 aa).

The Proton acceptor role is filled by His-250.

This sequence belongs to the transferase hexapeptide repeat family. LpxD subfamily. Homotrimer.

The catalysed reaction is a UDP-3-O-[(3R)-3-hydroxyacyl]-alpha-D-glucosamine + a (3R)-hydroxyacyl-[ACP] = a UDP-2-N,3-O-bis[(3R)-3-hydroxyacyl]-alpha-D-glucosamine + holo-[ACP] + H(+). It participates in bacterial outer membrane biogenesis; LPS lipid A biosynthesis. Its function is as follows. Catalyzes the N-acylation of UDP-3-O-acylglucosamine using 3-hydroxyacyl-ACP as the acyl donor. Is involved in the biosynthesis of lipid A, a phosphorylated glycolipid that anchors the lipopolysaccharide to the outer membrane of the cell. This chain is UDP-3-O-acylglucosamine N-acyltransferase, found in Maricaulis maris (strain MCS10) (Caulobacter maris).